The sequence spans 299 residues: Proline iminopeptidase (299 aa).

The AB hydrolase-1 domain occupies 29-279 (PLLLLHGGPG…SRHMAFIDEP (251 aa)). Ser-105 (nucleophile) is an active-site residue. Residue Asp-245 is part of the active site. The active-site Proton donor is the His-272.

This sequence belongs to the peptidase S33 family.

It is found in the cell envelope. It catalyses the reaction Release of N-terminal proline from a peptide.. In terms of biological role, releases the N-terminal proline from various substrates. This Levilactobacillus brevis (strain ATCC 367 / BCRC 12310 / CIP 105137 / JCM 1170 / LMG 11437 / NCIMB 947 / NCTC 947) (Lactobacillus brevis) protein is Proline iminopeptidase.